Consider the following 626-residue polypeptide: Phosphomethylpyrimidine synthase (626 aa).

The disordered stretch occupies residues 1–27 (MSKQEKAISLSESAQVDQQSVQPLPNS). Over residues 10–25 (LSESAQVDQQSVQPLP) the composition is skewed to polar residues. Substrate is bound by residues N232, M261, Y290, H326, 346 to 348 (SRG), 387 to 390 (DGLR), and E426. H430 is a binding site for Zn(2+). Residue Y453 coordinates substrate. Position 494 (H494) interacts with Zn(2+). Positions 574, 577, and 582 each coordinate [4Fe-4S] cluster.

The protein belongs to the ThiC family. In terms of assembly, homodimer. [4Fe-4S] cluster is required as a cofactor.

The enzyme catalyses 5-amino-1-(5-phospho-beta-D-ribosyl)imidazole + S-adenosyl-L-methionine = 4-amino-2-methyl-5-(phosphooxymethyl)pyrimidine + CO + 5'-deoxyadenosine + formate + L-methionine + 3 H(+). It participates in cofactor biosynthesis; thiamine diphosphate biosynthesis. Its function is as follows. Catalyzes the synthesis of the hydroxymethylpyrimidine phosphate (HMP-P) moiety of thiamine from aminoimidazole ribotide (AIR) in a radical S-adenosyl-L-methionine (SAM)-dependent reaction. This chain is Phosphomethylpyrimidine synthase, found in Pseudomonas entomophila (strain L48).